We begin with the raw amino-acid sequence, 487 residues long: Betaine aldehyde dehydrogenase (487 aa).

Positions 27 and 93 each coordinate K(+). 149–151 (GAW) serves as a coordination point for NAD(+). Lysine 161 functions as the Charge relay system in the catalytic mechanism. NAD(+)-binding positions include 175 to 178 (KPSE) and 228 to 231 (SVPT). Residue leucine 243 participates in K(+) binding. Glutamate 249 serves as the catalytic Proton acceptor. NAD(+) contacts are provided by glycine 251, cysteine 283, and glutamate 384. The active-site Nucleophile is the cysteine 283. Position 283 is a cysteine sulfenic acid (-SOH) (cysteine 283). K(+) contacts are provided by lysine 454 and glycine 457. Glutamate 461 acts as the Charge relay system in catalysis.

This sequence belongs to the aldehyde dehydrogenase family. As to quaternary structure, dimer of dimers. It depends on K(+) as a cofactor.

The enzyme catalyses betaine aldehyde + NAD(+) + H2O = glycine betaine + NADH + 2 H(+). It participates in amine and polyamine biosynthesis; betaine biosynthesis via choline pathway; betaine from betaine aldehyde: step 1/1. Involved in the biosynthesis of the osmoprotectant glycine betaine. Catalyzes the irreversible oxidation of betaine aldehyde to the corresponding acid. This chain is Betaine aldehyde dehydrogenase, found in Brucella abortus (strain S19).